Here is a 643-residue protein sequence, read N- to C-terminus: Alpha-dioxygenase PIOX (643 aa).

The active-site Proton acceptor is His167. Asp168 provides a ligand contact to Ca(2+). His172 serves as a coordination point for heme b. Ca(2+)-binding residues include Thr220, Trp222, Asp224, and Ser226. Residues His392, Arg489, and Arg493 each coordinate heme b.

This sequence belongs to the peroxidase family. Heme b is required as a cofactor. Requires Ca(2+) as cofactor.

The catalysed reaction is a 1,2-saturated fatty acid + O2 = a (2R)-2-hydroperoxy fatty acid. The enzyme catalyses (9Z,12Z,15Z)-octadecatrienoate + O2 = (R)-2-hydroperoxy-(9Z,12Z,15Z)-octadecatrienoate. It catalyses the reaction (9Z,12Z)-octadecadienoate + O2 = (2R,9Z,12Z)-2-hydroperoxyoctadecadienoate. Functionally, alpha-dioxygenase that catalyzes the primary oxygenation step of a variety of 14-20 carbon fatty acids, containing up to three unsaturated bonds, into their corresponding 2R-hydroperoxides. Involved in the production of oxylipins that function in cell signaling, wound healing, and protection from infection. In Nicotiana tabacum (Common tobacco), this protein is Alpha-dioxygenase PIOX.